Consider the following 182-residue polypeptide: Signal peptidase I (182 aa).

Over 1–13 the chain is Cytoplasmic; sequence MTKQKEKRGRRWP. A helical membrane pass occupies residues 14 to 30; the sequence is WFVAVCVVATLRLFVFS. The Extracellular portion of the chain corresponds to 31–182; sequence NYVVEGKSMM…WPFKQFAFQF (152 aa). Residues serine 38 and lysine 79 contribute to the active site.

It belongs to the peptidase S26 family.

The protein resides in the cell membrane. The catalysed reaction is Cleavage of hydrophobic, N-terminal signal or leader sequences from secreted and periplasmic proteins.. The sequence is that of Signal peptidase I (lepB) from Bacillus caldolyticus.